A 579-amino-acid chain; its full sequence is Membrane protein insertase YidC (579 aa).

The helical transmembrane segment at 10–30 (LVIVTILSALILFGWSFVTKH) threads the bilayer. Positions 35–61 (PPAPTQQGKNQPKAELTAEESGDKPLK) are disordered. 5 helical membrane-spanning segments follow: residues 330-350 (FDKAIDWGWFAIIEKVFFYYL), 351-371 (DWLFLHVGNYGLAIILMVFTI), 423-443 (VNPFAGCLPMFIQFPIFIALY), 478-498 (LLHFTPPHFLMIGVLPIILGI), and 523-543 (PLISVIFMAPLAAGLQVYYIF). The span at 560 to 572 (STPEERQDRAERK) shows a compositional bias: basic and acidic residues. The disordered stretch occupies residues 560–579 (STPEERQDRAERKRPSKKKA).

It belongs to the OXA1/ALB3/YidC family. Type 1 subfamily. As to quaternary structure, interacts with the Sec translocase complex via SecD. Specifically interacts with transmembrane segments of nascent integral membrane proteins during membrane integration.

It is found in the cell inner membrane. Its function is as follows. Required for the insertion and/or proper folding and/or complex formation of integral membrane proteins into the membrane. Involved in integration of membrane proteins that insert both dependently and independently of the Sec translocase complex, as well as at least some lipoproteins. Aids folding of multispanning membrane proteins. The chain is Membrane protein insertase YidC from Zymomonas mobilis subsp. mobilis (strain ATCC 31821 / ZM4 / CP4).